The sequence spans 631 residues: 1-deoxy-D-xylulose-5-phosphate synthase (631 aa).

Thiamine diphosphate-binding positions include His87 and 128-130 (GHS). Asp159 serves as a coordination point for Mg(2+). Thiamine diphosphate-binding positions include 160 to 161 (GA), Asn188, Phe295, and Glu377. Position 188 (Asn188) interacts with Mg(2+).

The protein belongs to the transketolase family. DXPS subfamily. Homodimer. It depends on Mg(2+) as a cofactor. Thiamine diphosphate serves as cofactor.

The enzyme catalyses D-glyceraldehyde 3-phosphate + pyruvate + H(+) = 1-deoxy-D-xylulose 5-phosphate + CO2. Its pathway is metabolic intermediate biosynthesis; 1-deoxy-D-xylulose 5-phosphate biosynthesis; 1-deoxy-D-xylulose 5-phosphate from D-glyceraldehyde 3-phosphate and pyruvate: step 1/1. Its function is as follows. Catalyzes the acyloin condensation reaction between C atoms 2 and 3 of pyruvate and glyceraldehyde 3-phosphate to yield 1-deoxy-D-xylulose-5-phosphate (DXP). This Pseudomonas putida (strain ATCC 47054 / DSM 6125 / CFBP 8728 / NCIMB 11950 / KT2440) protein is 1-deoxy-D-xylulose-5-phosphate synthase.